We begin with the raw amino-acid sequence, 272 residues long: Cell division protein FtsQ (272 aa).

At 1-43 (MEYNPPNTRERIAARRQRLRQPSSEPAIPGWRRRFIDGLQSGR) the chain is on the cytoplasmic side. The chain crosses the membrane as a helical span at residues 44–64 (IVSGAVFVVSCLALFYVLFSS). The Extracellular portion of the chain corresponds to 65–272 (QFRVQTVEVV…FYQNRTDGRS (208 aa)). The 68-residue stretch at 66–133 (FRVQTVEVVG…DRARIVIVER (68 aa)) folds into the POTRA domain.

This sequence belongs to the FtsQ/DivIB family. FtsQ subfamily.

It localises to the cell membrane. Functionally, essential cell division protein. This is Cell division protein FtsQ from Chloroflexus aggregans (strain MD-66 / DSM 9485).